A 308-amino-acid chain; its full sequence is HTH-type transcriptional activator AllS (308 aa).

The HTH lysR-type domain maps to 2 to 59 (FDPETLRTFISVAETGSFSKAAERLCKTTATISYRIKLLEENTGVGLFFRTTRSVSLT). A DNA-binding region (H-T-H motif) is located at residues 19-38 (FSKAAERLCKTTATISYRIK).

It belongs to the LysR transcriptional regulatory family.

In terms of biological role, positive regulator essential for the expression of allD operon. Binds to the allD promoter. The protein is HTH-type transcriptional activator AllS (allS) of Salmonella paratyphi A (strain ATCC 9150 / SARB42).